The chain runs to 118 residues: Hydrogenase maturation factor HypA (118 aa).

Position 2 (His-2) interacts with Ni(2+). Cys-73, Cys-76, Cys-93, and Cys-96 together coordinate Zn(2+).

This sequence belongs to the HypA/HybF family.

In terms of biological role, involved in the maturation of [NiFe] hydrogenases. Required for nickel insertion into the metal center of the hydrogenase. In Lawsonia intracellularis (strain PHE/MN1-00), this protein is Hydrogenase maturation factor HypA.